The following is a 261-amino-acid chain: Indole-3-glycerol phosphate synthase (261 aa).

Belongs to the TrpC family.

It carries out the reaction 1-(2-carboxyphenylamino)-1-deoxy-D-ribulose 5-phosphate + H(+) = (1S,2R)-1-C-(indol-3-yl)glycerol 3-phosphate + CO2 + H2O. It functions in the pathway amino-acid biosynthesis; L-tryptophan biosynthesis; L-tryptophan from chorismate: step 4/5. The polypeptide is Indole-3-glycerol phosphate synthase (Burkholderia pseudomallei (strain 1106a)).